The sequence spans 890 residues: Nucleoside hydrolase 3 (890 aa).

An N-terminal signal peptide occupies residues 1–21; the sequence is MLTSPTLKSLWFLFTILGLLG. N-linked (GlcNAc...) asparagine glycosylation is found at asparagine 55, asparagine 232, asparagine 371, asparagine 485, asparagine 580, asparagine 655, and asparagine 740.

This sequence belongs to the IUNH family.

It localises to the secreted. Its subcellular location is the extracellular space. The protein resides in the apoplast. It catalyses the reaction a purine D-ribonucleoside + H2O = a purine nucleobase + D-ribose. The enzyme catalyses inosine + H2O = hypoxanthine + D-ribose. It carries out the reaction adenosine + H2O = D-ribose + adenine. In terms of biological role, extracellular purine-specific hydrolase present in the apoplastic fluid involved in the degradation of extracellular nucleosides, including inosine and adenosine, and which may participate in wound and pathogen responses (e.g. Botrytis cinerea). This is Nucleoside hydrolase 3 from Arabidopsis thaliana (Mouse-ear cress).